Reading from the N-terminus, the 477-residue chain is Otoconin-90 (477 aa).

The first 17 residues, 1-17 (MIAFLLTSVLMIPHAGG), serve as a signal peptide directing secretion. Asparagine 38 carries N-linked (GlcNAc...) asparagine glycosylation. 3 phospholipase A2-like regions span residues 76-190 (LIQF…TSFC), 305-361 (MPQL…RLGC), and 373-425 (CVDH…PAAC). Cystine bridges form between cysteine 85–cysteine 145, cysteine 99–cysteine 190, cysteine 101–cysteine 117, cysteine 116–cysteine 172, cysteine 123–cysteine 165, cysteine 132–cysteine 158, and cysteine 152–cysteine 163. Residue asparagine 179 is glycosylated (N-linked (GlcNAc...) asparagine). An N-linked (GlcNAc...) asparagine glycan is attached at asparagine 407. The disordered stretch occupies residues 428 to 477 (SLHPVPAAPTLGSSSEEDSEEDPPQEDLGRAKRFLRKSLGPLGIGPLHGR). Over residues 442-452 (SEEDSEEDPPQ) the composition is skewed to acidic residues.

This sequence belongs to the phospholipase A2 family. In terms of assembly, interacts with OTOL1.

The protein resides in the secreted. In terms of biological role, major protein of the otoconia, a calcium carbonate structure in the saccule and utricle of the ear. Together with OTOL1, acts as a scaffold for otoconia biomineralization: sequesters calcium and forms interconnecting fibrils between otoconia that are incorporated into the calcium crystal structure. Together with OTOL1, modulates calcite crystal morphology and growth kinetics. It is unlikely that this protein has phospholipase A2 activity. The protein is Otoconin-90 of Homo sapiens (Human).